We begin with the raw amino-acid sequence, 78 residues long: Acyl carrier protein (78 aa).

A Carrier domain is found at 2-77 (STIEERVKKI…AAIDYVKAHQ (76 aa)). Ser37 is modified (O-(pantetheine 4'-phosphoryl)serine).

The protein belongs to the acyl carrier protein (ACP) family. 4'-phosphopantetheine is transferred from CoA to a specific serine of apo-ACP by AcpS. This modification is essential for activity because fatty acids are bound in thioester linkage to the sulfhydryl of the prosthetic group.

It is found in the cytoplasm. The protein operates within lipid metabolism; fatty acid biosynthesis. Functionally, carrier of the growing fatty acid chain in fatty acid biosynthesis. The polypeptide is Acyl carrier protein (Pseudomonas putida (strain ATCC 47054 / DSM 6125 / CFBP 8728 / NCIMB 11950 / KT2440)).